Here is a 261-residue protein sequence, read N- to C-terminus: Chanoclavine-I dehydrogenase easD (261 aa).

An N-terminal signal peptide occupies residues 1–20 (MPSMTSKVFAITGGASGIGA). Isoleucine 18 contacts NADP(+). Asparagine 43 carries an N-linked (GlcNAc...) asparagine glycan. Positions 66, 132, 166, 170, and 201 each coordinate NADP(+). The Proton donor role is filled by tyrosine 166. Lysine 170 serves as the catalytic Lowers pKa of active site Tyr.

The protein belongs to the short-chain dehydrogenases/reductases (SDR) family. Homotetramer.

It carries out the reaction chanoclavine-I + NAD(+) = chanoclavine-I aldehyde + NADH + H(+). It functions in the pathway alkaloid biosynthesis; ergot alkaloid biosynthesis. Functionally, chanoclavine-I dehydrogenase; part of the gene cluster that mediates the biosynthesis of fungal ergot alkaloid. DmaW catalyzes the first step of ergot alkaloid biosynthesis by condensing dimethylallyl diphosphate (DMAP) and tryptophan to form 4-dimethylallyl-L-tryptophan. The second step is catalyzed by the methyltransferase easF that methylates 4-dimethylallyl-L-tryptophan in the presence of S-adenosyl-L-methionine, resulting in the formation of 4-dimethylallyl-L-abrine. The catalase easC and the FAD-dependent oxidoreductase easE then transform 4-dimethylallyl-L-abrine to chanoclavine-I which is further oxidized by easD in the presence of NAD(+), resulting in the formation of chanoclavine-I aldehyde. Agroclavine dehydrogenase easG then mediates the conversion of chanoclavine-I aldehyde to agroclavine via a non-enzymatic adduct reaction: the substrate is an iminium intermediate that is formed spontaneously from chanoclavine-I aldehyde in the presence of glutathione. The presence of easA is not required to complete this reaction. Further conversion of agroclavine to paspalic acid is a two-step process involving oxidation of agroclavine to elymoclavine and of elymoclavine to paspalic acid, the second step being performed by the elymoclavine oxidase cloA. Paspalic acid is then further converted to D-lysergic acid. Ergopeptines are assembled from D-lysergic acid and three different amino acids by the D-lysergyl-peptide-synthetases composed each of a monomudular and a trimodular nonribosomal peptide synthetase subunit. LpsB and lpsC encode the monomodular subunits responsible for D-lysergic acid activation and incorporation into the ergopeptine backbone. LpsA1 and A2 subunits encode the trimodular nonribosomal peptide synthetase assembling the tripeptide portion of ergopeptines. LpsA1 is responsible for formation of the major ergopeptine, ergotamine, and lpsA2 for alpha-ergocryptine, the minor ergopeptine of the total alkaloid mixture elaborated by C.purpurea. D-lysergyl-tripeptides are assembled by the nonribosomal peptide synthetases and released as N-(D-lysergyl-aminoacyl)-lactams. Cyclolization of the D-lysergyl-tripeptides is performed by the Fe(2+)/2-ketoglutarate-dependent dioxygenase easH which introduces a hydroxyl group into N-(D-lysergyl-aminoacyl)-lactam at alpha-C of the aminoacyl residue followed by spontaneous condensation with the terminal lactam carbonyl group. This Claviceps purpurea (strain 20.1) (Ergot fungus) protein is Chanoclavine-I dehydrogenase easD.